Consider the following 951-residue polypeptide: Bromodomain-containing protein 8 (951 aa).

K85 is subject to N6-acetyllysine. A coiled-coil region spans residues 97 to 171 (VRKLTAERVE…ATDAAYQARQ (75 aa)). A disordered region spans residues 161–273 (KATDAAYQAR…TPPPSPLLSE (113 aa)). Residues 204 to 226 (TPTTMEEATSGVTPGTLPSTPVT) are compositionally biased toward polar residues. Phosphoserine occurs at positions 456 and 460. The disordered stretch occupies residues 520–547 (EENDDPQSLPGPWEHPIQQERDKPVPLP). K542 participates in a covalent cross-link: Glycyl lysine isopeptide (Lys-Gly) (interchain with G-Cter in SUMO2). N6-acetyllysine; alternate is present on K554. K554 participates in a covalent cross-link: Glycyl lysine isopeptide (Lys-Gly) (interchain with G-Cter in SUMO1); alternate. K554 participates in a covalent cross-link: Glycyl lysine isopeptide (Lys-Gly) (interchain with G-Cter in SUMO2); alternate. K582 participates in a covalent cross-link: Glycyl lysine isopeptide (Lys-Gly) (interchain with G-Cter in SUMO2). A disordered region spans residues 584 to 745 (EPTEPEPGMS…PVSESDDGFS (162 aa)). The span at 610–622 (PELRSQDSDEEPR) shows a compositional bias: basic and acidic residues. K648 is covalently cross-linked (Glycyl lysine isopeptide (Lys-Gly) (interchain with G-Cter in SUMO2)). S652 carries the post-translational modification Phosphoserine. A compositionally biased stretch (basic and acidic residues) spans 673 to 688 (ETQHKFEMSDSLKEES). Residue K685 forms a Glycyl lysine isopeptide (Lys-Gly) (interchain with G-Cter in SUMO2) linkage. 3 positions are modified to phosphoserine: S694, S710, and S714. The Bromo domain occupies 779-884 (IQAQKIWKKA…RDVLEQIQQF (106 aa)). Positions 900-922 (AKSLRGRDSTRKQDASEKDSVPM) are disordered. Basic and acidic residues predominate over residues 904-919 (RGRDSTRKQDASEKDS).

Component of the NuA4 histone acetyltransferase complex which contains the catalytic subunit KAT5/TIP60 and the subunits EP400, TRRAP/PAF400, BRD8/SMAP, EPC1, DMAP1/DNMAP1, RUVBL1/TIP49, RUVBL2, ING3, actin, ACTL6A/BAF53A, MORF4L1/MRG15, MORF4L2/MRGX, MRGBP, YEATS4/GAS41, VPS72/YL1 and MEAF6. Component of a NuA4-related complex which contains EP400, TRRAP/PAF400, SRCAP, BRD8/SMAP, EPC1, DMAP1/DNMAP1, RUVBL1/TIP49, RUVBL2, actin, ACTL6A/BAF53A, VPS72 and YEATS4/GAS41. BRD8 isoform 2 interacts with RXRA/NR2B1 and THRB/ERBA2. Component of a SWR1-like complex.

The protein localises to the nucleus. Its function is as follows. May act as a coactivator during transcriptional activation by hormone-activated nuclear receptors (NR). Stimulates transcriptional activation by AR/DHTR, ESR1/NR3A1, RXRA/NR2B1 and THRB/ERBA2. Component of the NuA4 histone acetyltransferase (HAT) complex which is involved in transcriptional activation of select genes principally by acetylation of nucleosomal histones H4 and H2A. This modification may both alter nucleosome - DNA interactions and promote interaction of the modified histones with other proteins which positively regulate transcription. This complex may be required for the activation of transcriptional programs associated with oncogene and proto-oncogene mediated growth induction, tumor suppressor mediated growth arrest and replicative senescence, apoptosis, and DNA repair. NuA4 may also play a direct role in DNA repair when recruited to sites of DNA damage. Component of a SWR1-like complex that specifically mediates the removal of histone H2A.Z/H2AZ1 from the nucleosome. The chain is Bromodomain-containing protein 8 (Brd8) from Mus musculus (Mouse).